We begin with the raw amino-acid sequence, 509 residues long: Bifunctional purine biosynthesis protein PurH (509 aa).

Residues 1–146 enclose the MGS-like domain; the sequence is MTIQKINRVL…KNWYRVGVCV (146 aa).

The protein belongs to the PurH family.

The enzyme catalyses (6R)-10-formyltetrahydrofolate + 5-amino-1-(5-phospho-beta-D-ribosyl)imidazole-4-carboxamide = 5-formamido-1-(5-phospho-D-ribosyl)imidazole-4-carboxamide + (6S)-5,6,7,8-tetrahydrofolate. It catalyses the reaction IMP + H2O = 5-formamido-1-(5-phospho-D-ribosyl)imidazole-4-carboxamide. It functions in the pathway purine metabolism; IMP biosynthesis via de novo pathway; 5-formamido-1-(5-phospho-D-ribosyl)imidazole-4-carboxamide from 5-amino-1-(5-phospho-D-ribosyl)imidazole-4-carboxamide (10-formyl THF route): step 1/1. The protein operates within purine metabolism; IMP biosynthesis via de novo pathway; IMP from 5-formamido-1-(5-phospho-D-ribosyl)imidazole-4-carboxamide: step 1/1. The protein is Bifunctional purine biosynthesis protein PurH of Natranaerobius thermophilus (strain ATCC BAA-1301 / DSM 18059 / JW/NM-WN-LF).